Consider the following 155-residue polypeptide: RNA-binding protein 3 (155 aa).

In terms of domain architecture, RRM spans 6 to 84 (GKLFVGGLNF…RQIRVDHAGK (79 aa)). Arginine 47 carries the post-translational modification Omega-N-methylarginine. Positions 79–155 (VDHAGKSARG…GGNYRDNYDN (77 aa)) are disordered. Residue arginine 105 is modified to Asymmetric dimethylarginine; alternate. Residue arginine 105 is modified to Dimethylated arginine; alternate. An Omega-N-methylarginine; alternate modification is found at arginine 105. The span at 105-114 (RGGGDQGYGS) shows a compositional bias: gly residues. Omega-N-methylarginine occurs at positions 120 and 130. A phosphoserine mark is found at serine 135 and serine 145. The residue at position 153 (tyrosine 153) is a Phosphotyrosine.

As to quaternary structure, interacts with RPL4. Associates with the 60S ribosomal subunits. Arg-105 is dimethylated, probably to asymmetric dimethylarginine. In terms of processing, phosphorylated. Isoform 2 is methylated. Widely expressed in the brain. Highly expressed in the cerebellum and olfactory bulb (at protein level). Expressed in neurons and glial cells.

It localises to the nucleus. The protein localises to the cytoplasm. It is found in the cell projection. Its subcellular location is the dendrite. Cold-inducible mRNA binding protein that enhances global protein synthesis at both physiological and mild hypothermic temperatures. Reduces the relative abundance of microRNAs, when overexpressed. Enhances phosphorylation of translation initiation factors and active polysome formation. This chain is RNA-binding protein 3 (Rbm3), found in Rattus norvegicus (Rat).